Reading from the N-terminus, the 1166-residue chain is Poly [ADP-ribose] polymerase tankyrase-2 (1166 aa).

3 ANK repeats span residues 57-89 (RKSTPLHFAAGFGRKDVVEYLLQNGANVQARDD), 90-122 (GGLIPLHNACSFGHAEVVNLLLRHGADPNARDN), and 123-155 (WNYTPLHEAAIKGKIDVCIVLLQHGAEPTIRNT). N203 bears the (3S)-3-hydroxyasparagine; by HIF1AN; partial mark. ANK repeat units lie at residues 210 to 242 (RKSTPLHLAAGYNRVKIVQLLLQHGADVHAKDK), 243 to 275 (GDLVPLHNACSYGHYEVTELLVKHGACVNAMDL), 276 to 308 (WQFTPLHEAASKNRVEVCSLLLSYGADPTLLNC), 363 to 398 (THETALHCAAASPYPKRKQICELLLRKGANINEKTK), 399 to 431 (EFLTPLHVASEKAHNDVVEVVVKHEAKVNALDN), and 432 to 464 (LGQTSLHRAAYCGHLQTCRLLLSYGCDPNIISL). H238 carries the post-translational modification (3S)-3-hydroxyhistidine; by HIF1AN; partial. (3S)-3-hydroxyasparagine; by HIF1AN; partial is present on N271. At N427 the chain carries (3S)-3-hydroxyasparagine; by HIF1AN; partial. Residue N518 is modified to (3S)-3-hydroxyasparagine; by HIF1AN; partial. ANK repeat units lie at residues 525–557 (RQSTPLHFAAGYNRVSVVEYLLQHGADVHAKDK), 558–590 (GGLVPLHNACSYGHYEVAELLVKHGAVVNVADL), and 591–623 (WKFTPLHEAAAKGKYEICKLLLQHGADPTKKNR). The segment at 545–553 (LLQHGADVH) is HIF1AN-binding. H553 is modified ((3S)-3-hydroxyhistidine; by HIF1AN; partial). Position 586 is a (3S)-3-hydroxyasparagine; by HIF1AN; partial (N586). (3S)-3-hydroxyasparagine; by HIF1AN; partial occurs at positions 671, 706, and 739. 3 ANK repeats span residues 678-710 (RHSTPLHLAAGYNNLEVAEYLLQHGADVNAQDK), 711-743 (GGLIPLHNAASYGHVDVAALLIKYNACVNATDK), and 744-776 (WAFTPLHEAAQKGRTQLCALLLAHGADPTLKNQ). Residues 819–839 (GATADALSSGPSSPSSLSAAS) are disordered. The segment covering 822–839 (ADALSSGPSSPSSLSAAS) has biased composition (low complexity). In terms of domain architecture, SAM spans 873-936 (GVDFSITQFV…IKGVERLISG (64 aa)). One can recognise a PARP catalytic domain in the interval 959–1164 (SPDDKEFQSV…YQIMRPEGMV (206 aa)). C1081, H1084, C1089, and C1092 together coordinate Zn(2+).

This sequence belongs to the ARTD/PARP family. In terms of assembly, oligomerizes and associates with TNKS. Interacts with the cytoplasmic domain of LNPEP/Otase in SLC2A4/GLUT4-vesicles. Binds to the N-terminus of Grb14 and TRF1 with its ankyrin repeat region. Interacts with HIF1AN. Interacts with RNF146; this interaction leads to ubiquitination and proteasomal degradation. Interacts with NUMA1. Ubiquitinated at 'Lys-48' and 'Lys-63' by RNF146 when auto-poly-ADP-ribosylated; this leads to degradation. Deubiquitinated by USP25; leading to stabilization. Post-translationally, ADP-ribosylated (-auto). Poly-ADP-ribosylated protein is recognized by RNF146, followed by ubiquitination. In terms of processing, the crystallographic evidence suggests that the 3-hydroxyhistidine may be the (3S) stereoisomer. Highly expressed in placenta, skeletal muscle, liver, brain, kidney, heart, thymus, spinal cord, lung, peripheral blood leukocytes, pancreas, lymph nodes, spleen, prostate, testis, ovary, small intestine, colon, mammary gland, breast and breast carcinoma, and in common-type meningioma. Highly expressed in fetal liver, heart and brain.

It localises to the cytoplasm. It is found in the golgi apparatus membrane. The protein localises to the nucleus. The protein resides in the chromosome. Its subcellular location is the telomere. The enzyme catalyses NAD(+) + (ADP-D-ribosyl)n-acceptor = nicotinamide + (ADP-D-ribosyl)n+1-acceptor + H(+).. The catalysed reaction is L-aspartyl-[protein] + NAD(+) = 4-O-(ADP-D-ribosyl)-L-aspartyl-[protein] + nicotinamide. It carries out the reaction L-glutamyl-[protein] + NAD(+) = 5-O-(ADP-D-ribosyl)-L-glutamyl-[protein] + nicotinamide. Specifically inhibited by XAV939, a small molecule, leading to inhibit the Wnt signaling pathway by stabilizing AXIN1 and AXIN2. Inhibited by talazoparib. In terms of biological role, poly-ADP-ribosyltransferase involved in various processes such as Wnt signaling pathway, telomere length and vesicle trafficking. Acts as an activator of the Wnt signaling pathway by mediating poly-ADP-ribosylation of AXIN1 and AXIN2, 2 key components of the beta-catenin destruction complex: poly-ADP-ribosylated target proteins are recognized by RNF146, which mediates their ubiquitination and subsequent degradation. Also mediates poly-ADP-ribosylation of BLZF1 and CASC3, followed by recruitment of RNF146 and subsequent ubiquitination. Mediates poly-ADP-ribosylation of TERF1, thereby contributing to the regulation of telomere length. Stimulates 26S proteasome activity. The polypeptide is Poly [ADP-ribose] polymerase tankyrase-2 (Homo sapiens (Human)).